Reading from the N-terminus, the 248-residue chain is MAGHSQFANIKHRKGAQDAKRAQRFTKLIREIIVSAKQGLPDPEFNSRLRSAIIAAKKENLPKDRIDAAIKSATGNTQSDNYEEVVYEGYGPGNIALMIQTLTNNRNRTAAELRHALSKYNGKLGESGSVSFLFNHVGVIAYKAASIDNFDSLFNIAIELQALDVEETTQDESQEKMYYVTCNVQDFGNVRDQLFNKFSDAEFSRLFWKPSDILKIEDEEIQKKISSLMDLLENNDDVQYIDSNFTFC.

The tract at residues Met1–Arg21 is disordered.

Belongs to the TACO1 family.

Its subcellular location is the cytoplasm. In Ehrlichia canis (strain Jake), this protein is Probable transcriptional regulatory protein Ecaj_0351.